Reading from the N-terminus, the 436-residue chain is Trigger factor (436 aa).

Positions 163 to 248 constitute a PPIase FKBP-type domain; sequence GDTVNIDFDG…VNEIKYKDVP (86 aa).

Belongs to the FKBP-type PPIase family. Tig subfamily.

It localises to the cytoplasm. It carries out the reaction [protein]-peptidylproline (omega=180) = [protein]-peptidylproline (omega=0). Its function is as follows. Involved in protein export. Acts as a chaperone by maintaining the newly synthesized protein in an open conformation. Functions as a peptidyl-prolyl cis-trans isomerase. This is Trigger factor from Staphylococcus saprophyticus subsp. saprophyticus (strain ATCC 15305 / DSM 20229 / NCIMB 8711 / NCTC 7292 / S-41).